Consider the following 254-residue polypeptide: rRNA N-glycosylase sapovaccarin-S1 (254 aa).

Belongs to the ribosome-inactivating protein family. Type 1 RIP subfamily. Expressed in seeds; most abundant in the perisperm.

It carries out the reaction Endohydrolysis of the N-glycosidic bond at one specific adenosine on the 28S rRNA.. Functionally, exhibits N-glycosylase activity. Catalyzes the release of one adenine from a ribosome. Acts as a ribosome-inactivating protein and inhibits protein synthesis in a rabbit-reticulocyte lysate system and in various cell lines (in vitro). Induces cell death in Huh-7 liver cells. May contribute to the protection against plant pests and predators or play a role in regulating the death of plant cells. This Gypsophila vaccaria (Cow soapwort) protein is rRNA N-glycosylase sapovaccarin-S1.